A 285-amino-acid polypeptide reads, in one-letter code: Cytochrome c1 (285 aa).

The N-terminal stretch at 1 to 22 (MIRKLTLTAATALALSGGAAMA) is a signal peptide. Heme c contacts are provided by cysteine 58, cysteine 61, histidine 62, and methionine 207. The helical transmembrane segment at 251 to 269 (AGFTAVMFLTVLSVLLYLT) threads the bilayer.

In terms of assembly, the main subunits of complex b-c1 are: cytochrome b, cytochrome c1 and the Rieske protein. Binds 1 heme c group covalently per subunit.

It localises to the cell membrane. In terms of biological role, component of the ubiquinol-cytochrome c reductase complex (complex III or cytochrome b-c1 complex), which is a respiratory chain that generates an electrochemical potential coupled to ATP synthesis. c1 functions as an electron donor to cytochrome c. The chain is Cytochrome c1 (petC) from Cereibacter sphaeroides (Rhodobacter sphaeroides).